The primary structure comprises 93 residues: Small ribosomal subunit protein bS20c (93 aa).

Belongs to the bacterial ribosomal protein bS20 family.

It is found in the plastid. The protein resides in the chloroplast. Functionally, binds directly to 16S ribosomal RNA. The chain is Small ribosomal subunit protein bS20c from Thalassiosira pseudonana (Marine diatom).